The following is a 330-amino-acid chain: Delta-aminolevulinic acid dehydratase (330 aa).

Residues Cys122, Cys124, His131, and Cys132 each contribute to the Zn(2+) site. Lys199 (schiff-base intermediate with substrate) is an active-site residue. Residue Lys199 is modified to N6-succinyllysine. Arg209 serves as a coordination point for 5-aminolevulinate. Ser215 is modified (phosphoserine). Arg221 serves as a coordination point for 5-aminolevulinate. A Zn(2+)-binding site is contributed by Cys223. The active-site Schiff-base intermediate with substrate is the Lys252. N6-succinyllysine is present on Lys252. Ser279 and Tyr318 together coordinate 5-aminolevulinate.

It belongs to the ALAD family. As to quaternary structure, homooctamer; active form. Homohexamer; low activity form. The cofactor is Zn(2+).

It is found in the cytoplasm. It localises to the cytosol. It catalyses the reaction 2 5-aminolevulinate = porphobilinogen + 2 H2O + H(+). It functions in the pathway porphyrin-containing compound metabolism; protoporphyrin-IX biosynthesis; coproporphyrinogen-III from 5-aminolevulinate: step 1/4. Can alternate between a fully active homooctamer and a low-activity homohexamer. A bound magnesium ion may promote the assembly of the fully active homooctamer. The magnesium-binding site is absent in the low-activity homohexamer. Inhibited by compounds that favor the hexameric state. Inhibited by divalent lead ions. The lead ions partially displace the zinc cofactor. In terms of biological role, catalyzes an early step in the biosynthesis of tetrapyrroles. Binds two molecules of 5-aminolevulinate per subunit, each at a distinct site, and catalyzes their condensation to form porphobilinogen. The sequence is that of Delta-aminolevulinic acid dehydratase (ALAD) from Macaca fascicularis (Crab-eating macaque).